The chain runs to 529 residues: Cytochrome P450 monooxygenase ausG (529 aa).

A helical membrane pass occupies residues 31 to 51; that stretch reads FLVTCGLPWLLLLFSVTIILF. Cys-470 is a binding site for heme.

Belongs to the cytochrome P450 family. Requires heme as cofactor.

The protein localises to the membrane. It participates in secondary metabolite biosynthesis; terpenoid biosynthesis. Functionally, cytochrome P450 monooxygenase; part of the gene cluster B that mediates the biosynthesis of austinol and dehydroaustinol, two fungal meroterpenoids. The first step of the pathway is the synthesis of 3,5-dimethylorsellinic acid by the polyketide synthase ausA. 3,5-dimethylorsellinic acid is then prenylated by the polyprenyl transferase ausN. Further epoxidation by the FAD-dependent monooxygenase ausM and cyclization by the probable terpene cyclase ausL lead to the formation of protoaustinoid A. Protoaustinoid A is then oxidized to spiro-lactone preaustinoid A3 by the combined action of the FAD-binding monooxygenases ausB and ausC, and the dioxygenase ausE. Acid-catalyzed keto-rearrangement and ring contraction of the tetraketide portion of preaustinoid A3 by ausJ lead to the formation of preaustinoid A4. The aldo-keto reductase ausK, with the help of ausH, is involved in the next step by transforming preaustinoid A4 into isoaustinone which is in turn hydroxylated by the P450 monooxygenase ausI to form austinolide. Finally, the cytochrome P450 monooxygenase ausG modifies austinolide to austinol. Austinol can be further modified to dehydroaustinol which forms a diffusible complex with diorcinol that initiates conidiation. Due to genetic rearrangements of the clusters and the subsequent loss of some enzymes, the end products of the Emericella nidulans austinoid biosynthesis clusters are austinol and dehydroaustinol, even if additional enzymes, such as the O-acetyltransferase ausQ and the cytochrome P450 monooxygenase ausR are still functional. The protein is Cytochrome P450 monooxygenase ausG of Emericella nidulans (strain FGSC A4 / ATCC 38163 / CBS 112.46 / NRRL 194 / M139) (Aspergillus nidulans).